Here is a 360-residue protein sequence, read N- to C-terminus: Mannonate dehydratase (360 aa).

The protein belongs to the mannonate dehydratase family. The cofactor is Fe(2+). Mn(2+) serves as cofactor.

It catalyses the reaction D-mannonate = 2-dehydro-3-deoxy-D-gluconate + H2O. It functions in the pathway carbohydrate metabolism; pentose and glucuronate interconversion. In terms of biological role, catalyzes the dehydration of D-mannonate. In Thermotoga sp. (strain RQ2), this protein is Mannonate dehydratase.